Consider the following 786-residue polypeptide: Wall-associated receptor kinase-like 17 (786 aa).

The N-terminal stretch at 1–30 (MSYKNTNNSHLILFKLLLLLILYSADLTAS) is a signal peptide. Residues 31 to 369 (SSCRSECGGC…YRCVGDKTKA (339 aa)) are Extracellular-facing. 5 N-linked (GlcNAc...) asparagine glycosylation sites follow: Asn69, Asn122, Asn160, Asn165, and Asn274. The interval 301-362 (CICDYTMSII…CVNFEGGYRC (62 aa)) is atypical EGF-like. Intrachain disulfides connect Cys303–Cys318, Cys340–Cys353, and Cys347–Cys362. The chain crosses the membrane as a helical span at residues 370 to 390 (IMIGAGTGFGVLVLVGGVWWL). Residues 391–786 (RKFLVKRRMA…VEPLNPLLTW (396 aa)) lie on the Cytoplasmic side of the membrane. A Phosphothreonine modification is found at Thr433. The region spanning 444–719 (FSENRVLGHG…REVFTELERI (276 aa)) is the Protein kinase domain. ATP contacts are provided by residues 450-458 (LGHGGQGTV) and Lys472. Tyr517 is subject to Phosphotyrosine. Asp570 (proton acceptor) is an active-site residue. Residues Thr604 and Thr609 each carry the phosphothreonine modification. A Phosphotyrosine modification is found at Tyr617. The segment covering 766–775 (SSIVASPPSS) has biased composition (low complexity). Residues 766 to 786 (SSIVASPPSSDVEPLNPLLTW) are disordered.

It belongs to the protein kinase superfamily. Ser/Thr protein kinase family.

It localises to the membrane. It carries out the reaction L-seryl-[protein] + ATP = O-phospho-L-seryl-[protein] + ADP + H(+). It catalyses the reaction L-threonyl-[protein] + ATP = O-phospho-L-threonyl-[protein] + ADP + H(+). In terms of biological role, serine/threonine-protein kinase that may function as a signaling receptor of extracellular matrix component. The protein is Wall-associated receptor kinase-like 17 (WAKL17) of Arabidopsis thaliana (Mouse-ear cress).